We begin with the raw amino-acid sequence, 964 residues long: Translation initiation factor IF-2 (964 aa).

Residues 49–357 form a disordered region; the sequence is QIGSAEPADD…QEFDEMQAPL (309 aa). Residues 62–85 are compositionally biased toward low complexity; that stretch reads AKPAARKSQTSSKKTSKETTTAKP. Pro residues predominate over residues 86–102; it reads APGPKPGPGPKPTPGPR. The span at 103–117 shows a compositional bias: low complexity; that stretch reads PGSSSGPKPGRSSAA. Pro residues predominate over residues 159–169; sequence PHAPAPKPKPG. Low complexity-rich tracts occupy residues 190-212 and 242-251; these read GLPSAARPGPRPGAGRRTGAPRP and GQGERMPRPG. Composition is skewed to gly residues over residues 252–261 and 284–334; these read GSQGSRGGSG and GRGG…GRGG. Basic residues predominate over residues 335–346; that stretch reads GGRRGRKSRKQR. Residues 458 to 629 enclose the tr-type G domain; sequence ARPPVVTVMG…AIVLTADAAL (172 aa). The segment at 467–474 is G1; the sequence is GHVDHGKT. 467 to 474 lines the GTP pocket; that stretch reads GHVDHGKT. Residues 492-496 are G2; sequence GITQA. The G3 stretch occupies residues 517 to 520; the sequence is DTPG. Residues 517-521 and 571-574 each bind GTP; these read DTPGH and NKID. The G4 stretch occupies residues 571–574; the sequence is NKID. Positions 607-609 are G5; that stretch reads SAR.

This sequence belongs to the TRAFAC class translation factor GTPase superfamily. Classic translation factor GTPase family. IF-2 subfamily.

It is found in the cytoplasm. One of the essential components for the initiation of protein synthesis. Protects formylmethionyl-tRNA from spontaneous hydrolysis and promotes its binding to the 30S ribosomal subunits. Also involved in the hydrolysis of GTP during the formation of the 70S ribosomal complex. The chain is Translation initiation factor IF-2 from Cutibacterium acnes (strain DSM 16379 / KPA171202) (Propionibacterium acnes).